The sequence spans 559 residues: Subtelomeric hrmA-associated cluster protein AFUB_079030 (559 aa).

Disordered stretches follow at residues 163–190, 298–351, 427–451, and 525–559; these read AKHPYNGGKPPAGAPPGKKGDPEKTKPE, RESN…TGMA, SITSSSPEQTSHHRQAPLPMQHSAS, and FRTGFLSHPCDPSQQAPHSSGCGHPDSWTQNRPHV. Over residues 169 to 179 the composition is skewed to low complexity; sequence GGKPPAGAPPG. Composition is skewed to basic and acidic residues over residues 180-189 and 300-325; these read KKGDPEKTKP and SNQKEKDGDSNVDPDQKHEQEDDNAR. Over residues 336–346 the composition is skewed to polar residues; the sequence is NSTSPMSNSAE.

In terms of biological role, part of the subtelomeric hrmA-associated cluster (HAC) containing genes that alter the hyphal surface (such as reduced total chitin or increased beta-glucan exposure) and perturb inter-hyphal interactions within the developing biofilms, resulting in a loss of vertically aligned polarized growing filaments. Consequently, this hypoxia-typic morphotype (called H-MORPH) with altered biofilm architecture leads to increased hypoxia fitness, increased host inflammation, rapid disease progression, and mortality in a murine model of invasive aspergillosis. This is Subtelomeric hrmA-associated cluster protein AFUB_079030 from Aspergillus fumigatus (strain CBS 144.89 / FGSC A1163 / CEA10) (Neosartorya fumigata).